Consider the following 238-residue polypeptide: Large ribosomal subunit protein uL3 (238 aa).

An N5-methylglutamine modification is found at glutamine 157.

The protein belongs to the universal ribosomal protein uL3 family. In terms of assembly, part of the 50S ribosomal subunit. Forms a cluster with proteins L14 and L19. In terms of processing, methylated by PrmB.

Functionally, one of the primary rRNA binding proteins, it binds directly near the 3'-end of the 23S rRNA, where it nucleates assembly of the 50S subunit. This chain is Large ribosomal subunit protein uL3, found in Ruthia magnifica subsp. Calyptogena magnifica.